A 339-amino-acid polypeptide reads, in one-letter code: MEERLVSGYELTEDENEFSLRPRRLSEYIGQQKVKETISIFIEAAKKRNEALDHVLLFGPPGLGKTTLATIIANELGVDIKITSGPALERPGDLAAILTNLGEKDVLFIDEIHRLPRIVEEVLYSAMEDFALDIMLGKGPGARSLRLSLPKFTLIGATTRAGLLTSPLRDRFGMVHRLEFYSVEELMLIINRSAALLKTEITPEGSFEIAKRSRGTPRIANRLLKRVRDYAEVRSSGVINLENAKAALDLLEIDELGLDPTDRLILKTMIEKYQGGPVGIEAIAAAISEEVDTIEDVYEPFLLQIGFIKRTPRGRVVTKLAYDHLGIAYNKNAGELSLW.

The segment at Met-1–Tyr-181 is large ATPase domain (RuvB-L). Residues Leu-20, Arg-21, Gly-62, Lys-65, Thr-66, Thr-67, Glu-128–Phe-130, Arg-171, Tyr-181, and Arg-218 contribute to the ATP site. Thr-66 serves as a coordination point for Mg(2+). Residues Ser-182–Glu-252 are small ATPAse domain (RuvB-S). Positions Glu-255 to Trp-339 are head domain (RuvB-H). DNA contacts are provided by Arg-310 and Arg-315.

The protein belongs to the RuvB family. In terms of assembly, homohexamer. Forms an RuvA(8)-RuvB(12)-Holliday junction (HJ) complex. HJ DNA is sandwiched between 2 RuvA tetramers; dsDNA enters through RuvA and exits via RuvB. An RuvB hexamer assembles on each DNA strand where it exits the tetramer. Each RuvB hexamer is contacted by two RuvA subunits (via domain III) on 2 adjacent RuvB subunits; this complex drives branch migration. In the full resolvosome a probable DNA-RuvA(4)-RuvB(12)-RuvC(2) complex forms which resolves the HJ.

It is found in the cytoplasm. It carries out the reaction ATP + H2O = ADP + phosphate + H(+). The RuvA-RuvB-RuvC complex processes Holliday junction (HJ) DNA during genetic recombination and DNA repair, while the RuvA-RuvB complex plays an important role in the rescue of blocked DNA replication forks via replication fork reversal (RFR). RuvA specifically binds to HJ cruciform DNA, conferring on it an open structure. The RuvB hexamer acts as an ATP-dependent pump, pulling dsDNA into and through the RuvAB complex. RuvB forms 2 homohexamers on either side of HJ DNA bound by 1 or 2 RuvA tetramers; 4 subunits per hexamer contact DNA at a time. Coordinated motions by a converter formed by DNA-disengaged RuvB subunits stimulates ATP hydrolysis and nucleotide exchange. Immobilization of the converter enables RuvB to convert the ATP-contained energy into a lever motion, pulling 2 nucleotides of DNA out of the RuvA tetramer per ATP hydrolyzed, thus driving DNA branch migration. The RuvB motors rotate together with the DNA substrate, which together with the progressing nucleotide cycle form the mechanistic basis for DNA recombination by continuous HJ branch migration. Branch migration allows RuvC to scan DNA until it finds its consensus sequence, where it cleaves and resolves cruciform DNA. This Carboxydothermus hydrogenoformans (strain ATCC BAA-161 / DSM 6008 / Z-2901) protein is Holliday junction branch migration complex subunit RuvB.